A 387-amino-acid chain; its full sequence is 3-ketoacyl-CoA thiolase (387 aa).

C91 serves as the catalytic Acyl-thioester intermediate. Catalysis depends on proton acceptor residues H343 and C373.

Belongs to the thiolase-like superfamily. Thiolase family. In terms of assembly, heterotetramer of two alpha chains (FadB) and two beta chains (FadA).

It is found in the cytoplasm. It carries out the reaction an acyl-CoA + acetyl-CoA = a 3-oxoacyl-CoA + CoA. The protein operates within lipid metabolism; fatty acid beta-oxidation. In terms of biological role, catalyzes the final step of fatty acid oxidation in which acetyl-CoA is released and the CoA ester of a fatty acid two carbons shorter is formed. The protein is 3-ketoacyl-CoA thiolase of Vibrio vulnificus (strain YJ016).